The primary structure comprises 329 residues: Ribonucleoside-diphosphate reductase subunit beta (329 aa).

3 residues coordinate Fe cation: D66, E97, and H101. Y105 is an active-site residue. Fe cation-binding residues include E164, E198, and H201.

The protein belongs to the ribonucleoside diphosphate reductase small chain family. Tetramer of two alpha and two beta subunits. The cofactor is Fe cation.

The catalysed reaction is a 2'-deoxyribonucleoside 5'-diphosphate + [thioredoxin]-disulfide + H2O = a ribonucleoside 5'-diphosphate + [thioredoxin]-dithiol. Functionally, provides the precursors necessary for DNA synthesis. Catalyzes the biosynthesis of deoxyribonucleotides from the corresponding ribonucleotides. The chain is Ribonucleoside-diphosphate reductase subunit beta (nrdF) from Bacillus subtilis (strain 168).